Reading from the N-terminus, the 129-residue chain is Small ribosomal subunit protein uS11 (129 aa).

The protein belongs to the universal ribosomal protein uS11 family. As to quaternary structure, part of the 30S ribosomal subunit. Interacts with proteins S7 and S18. Binds to IF-3.

Located on the platform of the 30S subunit, it bridges several disparate RNA helices of the 16S rRNA. Forms part of the Shine-Dalgarno cleft in the 70S ribosome. The sequence is that of Small ribosomal subunit protein uS11 from Enterococcus faecalis (strain ATCC 700802 / V583).